Consider the following 236-residue polypeptide: 2-C-methyl-D-erythritol 4-phosphate cytidylyltransferase (236 aa).

It belongs to the IspD/TarI cytidylyltransferase family. IspD subfamily. Homodimer.

It catalyses the reaction 2-C-methyl-D-erythritol 4-phosphate + CTP + H(+) = 4-CDP-2-C-methyl-D-erythritol + diphosphate. It participates in isoprenoid biosynthesis; isopentenyl diphosphate biosynthesis via DXP pathway; isopentenyl diphosphate from 1-deoxy-D-xylulose 5-phosphate: step 2/6. Its function is as follows. Catalyzes the formation of 4-diphosphocytidyl-2-C-methyl-D-erythritol from CTP and 2-C-methyl-D-erythritol 4-phosphate (MEP). The polypeptide is 2-C-methyl-D-erythritol 4-phosphate cytidylyltransferase (Escherichia coli O127:H6 (strain E2348/69 / EPEC)).